Reading from the N-terminus, the 101-residue chain is Small ribosomal subunit protein uS17 (101 aa).

Belongs to the universal ribosomal protein uS17 family. As to quaternary structure, part of the 30S ribosomal subunit.

In terms of biological role, one of the primary rRNA binding proteins, it binds specifically to the 5'-end of 16S ribosomal RNA. This Kosmotoga olearia (strain ATCC BAA-1733 / DSM 21960 / TBF 19.5.1) protein is Small ribosomal subunit protein uS17.